A 94-amino-acid polypeptide reads, in one-letter code: Co-chaperonin GroES (94 aa).

It belongs to the GroES chaperonin family. In terms of assembly, heptamer of 7 subunits arranged in a ring. Interacts with the chaperonin GroEL.

It localises to the cytoplasm. In terms of biological role, together with the chaperonin GroEL, plays an essential role in assisting protein folding. The GroEL-GroES system forms a nano-cage that allows encapsulation of the non-native substrate proteins and provides a physical environment optimized to promote and accelerate protein folding. GroES binds to the apical surface of the GroEL ring, thereby capping the opening of the GroEL channel. This chain is Co-chaperonin GroES, found in Heliobacterium modesticaldum (strain ATCC 51547 / Ice1).